Here is a 78-residue protein sequence, read N- to C-terminus: UPF0335 protein RBE_1185 (78 aa).

The protein belongs to the UPF0335 family.

This chain is UPF0335 protein RBE_1185, found in Rickettsia bellii (strain RML369-C).